Here is a 430-residue protein sequence, read N- to C-terminus: Tektin-2 (430 aa).

Coiled-coil stretches lie at residues 82–160 and 273–379; these read LTDL…QAFE and EKVY…DIAC.

This sequence belongs to the tektin family. As to quaternary structure, microtubule inner protein component of sperm flagellar doublet microtubules. May interact with CCDC172. Post-translationally, tyrosine phosphorylated. Ubiquitinated, leading to its degradation. Deubiquitinated by USP16, promoting its stability.

It localises to the cytoplasm. Its subcellular location is the cytoskeleton. The protein resides in the cilium axoneme. It is found in the flagellum axoneme. The protein localises to the microtubule organizing center. Microtubule inner protein (MIP) part of the dynein-decorated doublet microtubules (DMTs) in cilia and flagellar axoneme. Plays a key role in the assembly or attachment of the inner dynein arm to microtubules in sperm flagella and tracheal cilia. Forms filamentous polymers in the walls of ciliary and flagellar microtubules. This is Tektin-2 (TEKT2) from Macaca fascicularis (Crab-eating macaque).